Consider the following 237-residue polypeptide: MKDINLIEVEKLIGIEFENKGVLITALTHSSYANQFKDVKYNERLEFLGDSVLQLCVTKYLFNNYKDKSEGELTKIRALVVCENSLHKVSKNLSLGKYIRMSKGEELTGGRERTSIQADALEAVIAAVYLDKGIEVANDFILRNFKDVIDKAINEEIILDFKTRLQEVLQKNGEVNIVYNLVKHEGPPHRRKFFTDLLINNEIMGQGVGFSKKESEQNAAKAALQRLGEIKWEKDTI.

An RNase III domain is found at 6 to 133 (LIEVEKLIGI…VIAAVYLDKG (128 aa)). Glu-46 lines the Mg(2+) pocket. Asp-50 is an active-site residue. Mg(2+) is bound by residues Asp-119 and Glu-122. Residue Glu-122 is part of the active site. The DRBM domain occupies 160 to 229 (DFKTRLQEVL…AKAALQRLGE (70 aa)).

Belongs to the ribonuclease III family. As to quaternary structure, homodimer. Mg(2+) serves as cofactor.

The protein localises to the cytoplasm. The catalysed reaction is Endonucleolytic cleavage to 5'-phosphomonoester.. Its function is as follows. Digests double-stranded RNA. Involved in the processing of primary rRNA transcript to yield the immediate precursors to the large and small rRNAs (23S and 16S). Processes some mRNAs, and tRNAs when they are encoded in the rRNA operon. Processes pre-crRNA and tracrRNA of type II CRISPR loci if present in the organism. This Clostridium perfringens (strain 13 / Type A) protein is Ribonuclease 3.